The primary structure comprises 562 residues: Valerena-4,7(11)-diene synthase (562 aa).

Positions 314, 318, and 467 each coordinate Mg(2+). The DDXXD motif signature appears at 314 to 318 (DDTYD).

This sequence belongs to the terpene synthase family. Mg(2+) serves as cofactor. Predominantly expressed in root.

The catalysed reaction is (2E,6E)-farnesyl diphosphate = valerena-4,7(11)-diene + diphosphate. Functionally, catalyzes formation of valerena-4,7(11)-diene, one of the active ingredients responsible for the sedative effect extracted from Valeriana officinalis root. This Valeriana officinalis (Valerian) protein is Valerena-4,7(11)-diene synthase (TPS2).